Here is a 502-residue protein sequence, read N- to C-terminus: Cytochrome P450 71A1 (502 aa).

Residues 7 to 21 (LLFLAIALTFFLLKL) form a helical membrane-spanning segment. A heme-binding site is contributed by cysteine 443.

The protein belongs to the cytochrome P450 family. Heme serves as cofactor. As to expression, mesocarp.

The protein resides in the microsome membrane. The protein localises to the endoplasmic reticulum membrane. Involved in the metabolism of compounds associated with the development of flavor in the ripening fruit process, possibly by acting as trans-cinnamic acid 4-hydrolase. This Persea americana (Avocado) protein is Cytochrome P450 71A1 (CYP71A1).